Reading from the N-terminus, the 84-residue chain is UPF0473 protein CLD_2004 (84 aa).

It belongs to the UPF0473 family.

The polypeptide is UPF0473 protein CLD_2004 (Clostridium botulinum (strain Okra / Type B1)).